The primary structure comprises 1574 residues: Disco-interacting protein 2 homolog B (1574 aa).

3 positions are modified to phosphoserine: Ser9, Ser50, and Ser53. One can recognise a DMAP1-binding domain in the interval 12–130 (AVAALPPEVR…PMPTKRRSTF (119 aa)). The tract at residues 31 to 166 (LSEGDITQKG…AALSAALQQS (136 aa)) is disordered. Residues 52-62 (YSPQTQETDSI) show a composition bias toward polar residues. The span at 69–82 (QTPAPTAAQTSAPS) shows a compositional bias: low complexity. Residue Thr70 is modified to Phosphothreonine. Positions 91–103 (GARDERYRSDIHT) are enriched in basic and acidic residues. At Ser99 the chain carries Phosphoserine. Position 139 is a phosphothreonine (Thr139). 3 positions are modified to phosphoserine: Ser145, Ser147, and Ser152. Over residues 154-166 (RRQAALSAALQQS) the composition is skewed to low complexity. 3 positions are modified to phosphoserine: Ser177, Ser192, and Ser202. Residues 178–200 (IQGSSTSSSASSTLSHGEVKGTS) form a disordered region. Low complexity predominate over residues 181–192 (SSTSSSASSTLS). Residues 217–244 (APPDVTATTSSSSSSLRPANIDLPPSGI) are disordered. Phosphoserine is present on Ser256.

This sequence belongs to the DIP2 family. As to quaternary structure, interacts with alpha-tubulin. As to expression, highly expressed in brain and spinal cord (at protein level). In brain, expression is detected in the main olfactory bulb, cortex, lateral ventricle, cornu ammonis 1, cornu ammonis 3, dentate gyrus, striatum, cerebellar cortex and medial habenula. Expressed primarily in neurons including excitatory pyramidal neurons and inhibitory interneurons.

Its subcellular location is the cell projection. The protein resides in the dendrite. It localises to the axon. It is found in the perikaryon. Negatively regulates axonal outgrowth and is essential for normal synaptic transmission. Not required for regulation of axon polarity. Promotes acetylation of alpha-tubulin. This Mus musculus (Mouse) protein is Disco-interacting protein 2 homolog B (Dip2b).